Consider the following 573-residue polypeptide: 2-succinyl-5-enolpyruvyl-6-hydroxy-3-cyclohexene-1-carboxylate synthase (573 aa).

This sequence belongs to the TPP enzyme family. MenD subfamily. Homodimer. Mg(2+) is required as a cofactor. Mn(2+) serves as cofactor. The cofactor is thiamine diphosphate.

The catalysed reaction is isochorismate + 2-oxoglutarate + H(+) = 5-enolpyruvoyl-6-hydroxy-2-succinyl-cyclohex-3-ene-1-carboxylate + CO2. It functions in the pathway quinol/quinone metabolism; 1,4-dihydroxy-2-naphthoate biosynthesis; 1,4-dihydroxy-2-naphthoate from chorismate: step 2/7. It participates in quinol/quinone metabolism; menaquinone biosynthesis. In terms of biological role, catalyzes the thiamine diphosphate-dependent decarboxylation of 2-oxoglutarate and the subsequent addition of the resulting succinic semialdehyde-thiamine pyrophosphate anion to isochorismate to yield 2-succinyl-5-enolpyruvyl-6-hydroxy-3-cyclohexene-1-carboxylate (SEPHCHC). The chain is 2-succinyl-5-enolpyruvyl-6-hydroxy-3-cyclohexene-1-carboxylate synthase from Shewanella putrefaciens (strain CN-32 / ATCC BAA-453).